Here is a 360-residue protein sequence, read N- to C-terminus: Magnesium-protoporphyrin IX monomethyl ester [oxidative] cyclase (360 aa).

The protein belongs to the AcsF family. The cofactor is Fe cation.

The enzyme catalyses Mg-protoporphyrin IX 13-monomethyl ester + 3 NADPH + 3 O2 + 2 H(+) = 3,8-divinyl protochlorophyllide a + 3 NADP(+) + 5 H2O. Its pathway is porphyrin-containing compound metabolism; chlorophyll biosynthesis (light-independent). Catalyzes the formation of the isocyclic ring in chlorophyll biosynthesis. Mediates the cyclase reaction, which results in the formation of divinylprotochlorophyllide (Pchlide) characteristic of all chlorophylls from magnesium-protoporphyrin IX 13-monomethyl ester (MgPMME). In Synechococcus sp. (strain WH7803), this protein is Magnesium-protoporphyrin IX monomethyl ester [oxidative] cyclase.